The sequence spans 290 residues: Sodium/potassium-transporting ATPase subunit beta-2 (290 aa).

Over 1–39 (MVIQKEKKSCGQVVEEWKEFVWNPRTHQFMGRTGTSWAF) the chain is Cytoplasmic. Residues 40-67 (ILLFYLVFYGFLTAMFTLTMWVMLQTVS) traverse the membrane as a helical; Signal-anchor for type II membrane protein segment. The Extracellular portion of the chain corresponds to 68–290 (EHTPKYQDRL…VAFKLRINKT (223 aa)). Residues Asn96 and Asn118 are each glycosylated (N-linked (GlcNAc...) asparagine). Cysteines 129 and 150 form a disulfide. Asn153 and Asn159 each carry an N-linked (GlcNAc...) asparagine glycan. A disulfide bridge connects residues Cys160 and Cys177. N-linked (GlcNAc...) asparagine glycosylation is found at Asn193, Asn197, and Asn238. Residues 193–290 (NQSMNVTCAG…VAFKLRINKT (98 aa)) are immunoglobulin-like. Residues Cys200 and Cys261 are joined by a disulfide bond.

It belongs to the X(+)/potassium ATPases subunit beta family. The sodium/potassium-transporting ATPase is composed of a catalytic alpha subunit, an auxiliary non-catalytic beta subunit and an additional regulatory subunit. Interacts with BSG.

It is found in the cell membrane. Its function is as follows. This is the non-catalytic component of the active enzyme, which catalyzes the hydrolysis of ATP coupled with the exchange of Na(+) and K(+) ions across the plasma membrane. The exact function of the beta-2 subunit is not known. Functionally, mediates cell adhesion of neurons and astrocytes, and promotes neurite outgrowth. This chain is Sodium/potassium-transporting ATPase subunit beta-2 (ATP1B2), found in Oryctolagus cuniculus (Rabbit).